The following is a 344-amino-acid chain: MIEIRNLSQRFEGPRGWIEALHNVNLTIPQGEVFGIIGRSGAGKSTLVRTINLLTRPSEGSVFVGGRDLTQLSAAELRGARRDIGMIFQHFNLLSSRTVFDNVALPLELAGVKRAQIEATVLPLLDLVGLAAQKDRYPAQISGGQKQRVGIARALASKPKVLLSDEATSALDPETTRAILDLLRRINRELGLTIVLITHQMEVIKDVCDRVAVLDAGRVVEEGNVIDVFMRPHHEVTRALIGDVIAQELPPAMKARVAERLKTGSGHLLRLAFTGSGVDQPILSETIRRYELDFNILHGQIDEIQGRAFGSLAVLATGEPGKVGQAFAYLREQGVVVEELSYVE.

Positions 2–241 constitute an ABC transporter domain; sequence IEIRNLSQRF…PHHEVTRALI (240 aa). 38–45 contacts ATP; sequence GRSGAGKS.

Belongs to the ABC transporter superfamily. Methionine importer (TC 3.A.1.24) family. In terms of assembly, the complex is composed of two ATP-binding proteins (MetN), two transmembrane proteins (MetI) and a solute-binding protein (MetQ).

Its subcellular location is the cell inner membrane. It catalyses the reaction L-methionine(out) + ATP + H2O = L-methionine(in) + ADP + phosphate + H(+). It carries out the reaction D-methionine(out) + ATP + H2O = D-methionine(in) + ADP + phosphate + H(+). In terms of biological role, part of the ABC transporter complex MetNIQ involved in methionine import. Responsible for energy coupling to the transport system. In Burkholderia mallei (strain ATCC 23344), this protein is Methionine import ATP-binding protein MetN 1.